Here is a 140-residue protein sequence, read N- to C-terminus: Acyl carrier protein 1, chloroplastic (140 aa).

A chloroplast-targeting transit peptide spans 1-56 (MASAAAGASICIKSASFSPLAPGRISSLRSVSLPVSRKSFPSLKSSKSSFALRVSC). Positions 60–135 (PETVAKVCGI…DAADLIEKLM (76 aa)) constitute a Carrier domain. Ser-95 carries the post-translational modification O-(pantetheine 4'-phosphoryl)serine.

It belongs to the acyl carrier protein (ACP) family. In terms of processing, 4'-phosphopantetheine is transferred from CoA to a specific serine of apo-ACP by acpS. This modification is essential for activity because fatty acids are bound in thioester linkage to the sulfhydryl of the prosthetic group.

The protein resides in the plastid. It is found in the chloroplast. Its pathway is lipid metabolism; fatty acid biosynthesis. Carrier of the growing fatty acid chain in fatty acid biosynthesis. This Cuphea lanceolata (Cigar flower) protein is Acyl carrier protein 1, chloroplastic (ACL1.1).